Reading from the N-terminus, the 338-residue chain is DNA-directed RNA polymerase subunit alpha (338 aa).

The tract at residues 1–230 (MRKITTSAYM…QQMSVFKGIL (230 aa)) is alpha N-terminal domain (alpha-NTD). An alpha C-terminal domain (alpha-CTD) region spans residues 247–338 (FSKLLSSVED…ELKSQMSAKE (92 aa)).

It belongs to the RNA polymerase alpha chain family. As to quaternary structure, homodimer. The RNAP catalytic core consists of 2 alpha, 1 beta, 1 beta' and 1 omega subunit. When a sigma factor is associated with the core the holoenzyme is formed, which can initiate transcription.

It carries out the reaction RNA(n) + a ribonucleoside 5'-triphosphate = RNA(n+1) + diphosphate. In terms of biological role, DNA-dependent RNA polymerase catalyzes the transcription of DNA into RNA using the four ribonucleoside triphosphates as substrates. This chain is DNA-directed RNA polymerase subunit alpha, found in Campylobacter concisus (strain 13826).